The sequence spans 468 residues: ATP synthase subunit beta (468 aa).

148–155 (GGAGVGKT) lines the ATP pocket.

The protein belongs to the ATPase alpha/beta chains family. As to quaternary structure, F-type ATPases have 2 components, CF(1) - the catalytic core - and CF(0) - the membrane proton channel. CF(1) has five subunits: alpha(3), beta(3), gamma(1), delta(1), epsilon(1). CF(0) has three main subunits: a(1), b(2) and c(9-12). The alpha and beta chains form an alternating ring which encloses part of the gamma chain. CF(1) is attached to CF(0) by a central stalk formed by the gamma and epsilon chains, while a peripheral stalk is formed by the delta and b chains.

The protein resides in the cell inner membrane. The enzyme catalyses ATP + H2O + 4 H(+)(in) = ADP + phosphate + 5 H(+)(out). Its function is as follows. Produces ATP from ADP in the presence of a proton gradient across the membrane. The catalytic sites are hosted primarily by the beta subunits. The sequence is that of ATP synthase subunit beta from Xanthomonas axonopodis pv. citri (strain 306).